The following is a 448-amino-acid chain: RING finger protein 44 (448 aa).

The segment at C396–R437 adopts an RING-type; atypical zinc-finger fold.

The polypeptide is RING finger protein 44 (rnf44) (Danio rerio (Zebrafish)).